We begin with the raw amino-acid sequence, 309 residues long: Homoserine O-acetyltransferase (309 aa).

C142 functions as the Acyl-thioester intermediate in the catalytic mechanism. Residues K163 and S192 each coordinate substrate. H235 acts as the Proton acceptor in catalysis. E237 is a catalytic residue. A substrate-binding site is contributed by R249.

This sequence belongs to the MetA family.

Its subcellular location is the cytoplasm. The enzyme catalyses L-homoserine + acetyl-CoA = O-acetyl-L-homoserine + CoA. The protein operates within amino-acid biosynthesis; L-methionine biosynthesis via de novo pathway; O-acetyl-L-homoserine from L-homoserine: step 1/1. Transfers an acetyl group from acetyl-CoA to L-homoserine, forming acetyl-L-homoserine. The sequence is that of Homoserine O-acetyltransferase from Allorhizobium ampelinum (strain ATCC BAA-846 / DSM 112012 / S4) (Agrobacterium vitis (strain S4)).